A 196-amino-acid polypeptide reads, in one-letter code: Elongation factor Ts (196 aa).

Residues 80 to 83 form an involved in Mg(2+) ion dislocation from EF-Tu region; sequence TDFV.

This sequence belongs to the EF-Ts family.

The protein resides in the cytoplasm. Its function is as follows. Associates with the EF-Tu.GDP complex and induces the exchange of GDP to GTP. It remains bound to the aminoacyl-tRNA.EF-Tu.GTP complex up to the GTP hydrolysis stage on the ribosome. This is Elongation factor Ts from Thermosipho melanesiensis (strain DSM 12029 / CIP 104789 / BI429).